Reading from the N-terminus, the 588-residue chain is Adenine deaminase (588 aa).

The protein belongs to the metallo-dependent hydrolases superfamily. Adenine deaminase family. It depends on Mn(2+) as a cofactor.

It carries out the reaction adenine + H2O + H(+) = hypoxanthine + NH4(+). This is Adenine deaminase from Desulforamulus reducens (strain ATCC BAA-1160 / DSM 100696 / MI-1) (Desulfotomaculum reducens).